We begin with the raw amino-acid sequence, 150 residues long: Putative pre-16S rRNA nuclease (150 aa).

This sequence belongs to the YqgF nuclease family.

It is found in the cytoplasm. In terms of biological role, could be a nuclease involved in processing of the 5'-end of pre-16S rRNA. This Chlamydia felis (strain Fe/C-56) (Chlamydophila felis) protein is Putative pre-16S rRNA nuclease.